We begin with the raw amino-acid sequence, 147 residues long: Myoglobin (147 aa).

An N-acetylalanine modification is found at alanine 2. A Globin domain is found at 2 to 141 (ADFDAVLKCW…IIADLEANYK (140 aa)). A nitrite-binding site is contributed by histidine 60. O2 is bound at residue histidine 60. Residue histidine 89 participates in heme b binding.

This sequence belongs to the globin family. In terms of assembly, monomeric.

It is found in the cytoplasm. The protein resides in the sarcoplasm. It catalyses the reaction Fe(III)-heme b-[protein] + nitric oxide + H2O = Fe(II)-heme b-[protein] + nitrite + 2 H(+). The catalysed reaction is H2O2 + AH2 = A + 2 H2O. In terms of biological role, monomeric heme protein which primary function is to store oxygen and facilitate its diffusion within muscle tissues. Reversibly binds oxygen through a pentacoordinated heme iron and enables its timely and efficient release as needed during periods of heightened demand. Depending on the oxidative conditions of tissues and cells, and in addition to its ability to bind oxygen, it also has a nitrite reductase activity whereby it regulates the production of bioactive nitric oxide. Under stress conditions, like hypoxia and anoxia, it also protects cells against reactive oxygen species thanks to its pseudoperoxidase activity. This Thunnus albacares (Yellowfin tuna) protein is Myoglobin (mb).